We begin with the raw amino-acid sequence, 254 residues long: DNA-3-methyladenine glycosylase (254 aa).

Basic residues predominate over residues 1 to 10; that stretch reads MKTPARRSKR. The disordered stretch occupies residues 1 to 20; that stretch reads MKTPARRSKRVNQEESETNV.

This sequence belongs to the DNA glycosylase MPG family.

Its subcellular location is the nucleus. It catalyses the reaction Hydrolysis of alkylated DNA, releasing 3-methyladenine, 3-methylguanine, 7-methylguanine and 7-methyladenine.. Hydrolysis of the deoxyribose N-glycosidic bond to excise 3-methyladenine, and 7-methylguanine from the damaged DNA polymer formed by alkylation lesions. The chain is DNA-3-methyladenine glycosylase (MAG) from Arabidopsis thaliana (Mouse-ear cress).